Reading from the N-terminus, the 455-residue chain is Pup--protein ligase (455 aa).

Mg(2+) is bound at residue glutamate 12. Residue arginine 56 coordinates ATP. Tyrosine 58 contacts Mg(2+). The active-site Proton acceptor is aspartate 60. Residue glutamate 66 coordinates Mg(2+). Residues threonine 69 and tryptophan 422 each contribute to the ATP site.

This sequence belongs to the Pup ligase/Pup deamidase family. Pup-conjugating enzyme subfamily.

It catalyses the reaction ATP + [prokaryotic ubiquitin-like protein]-L-glutamate + [protein]-L-lysine = ADP + phosphate + N(6)-([prokaryotic ubiquitin-like protein]-gamma-L-glutamyl)-[protein]-L-lysine.. Its pathway is protein degradation; proteasomal Pup-dependent pathway. It participates in protein modification; protein pupylation. In terms of biological role, catalyzes the covalent attachment of the prokaryotic ubiquitin-like protein modifier Pup to the proteasomal substrate proteins, thereby targeting them for proteasomal degradation. This tagging system is termed pupylation. The ligation reaction involves the side-chain carboxylate of the C-terminal glutamate of Pup and the side-chain amino group of a substrate lysine. This Acidimicrobium ferrooxidans (strain DSM 10331 / JCM 15462 / NBRC 103882 / ICP) protein is Pup--protein ligase.